A 337-amino-acid chain; its full sequence is Probable dual-specificity RNA methyltransferase RlmN (337 aa).

The active-site Proton acceptor is Glu88. The region spanning 94–322 (SSDRLTVCVS…ASIRRSRGLD (229 aa)) is the Radical SAM core domain. The cysteines at positions 101 and 327 are disulfide-linked. Residues Cys108, Cys112, and Cys115 each contribute to the [4Fe-4S] cluster site. S-adenosyl-L-methionine-binding positions include 155–156 (GE), Ser185, 208–210 (SLH), and Asn284. The S-methylcysteine intermediate role is filled by Cys327.

The protein belongs to the radical SAM superfamily. RlmN family. The cofactor is [4Fe-4S] cluster.

Its subcellular location is the cytoplasm. The catalysed reaction is adenosine(2503) in 23S rRNA + 2 reduced [2Fe-2S]-[ferredoxin] + 2 S-adenosyl-L-methionine = 2-methyladenosine(2503) in 23S rRNA + 5'-deoxyadenosine + L-methionine + 2 oxidized [2Fe-2S]-[ferredoxin] + S-adenosyl-L-homocysteine. The enzyme catalyses adenosine(37) in tRNA + 2 reduced [2Fe-2S]-[ferredoxin] + 2 S-adenosyl-L-methionine = 2-methyladenosine(37) in tRNA + 5'-deoxyadenosine + L-methionine + 2 oxidized [2Fe-2S]-[ferredoxin] + S-adenosyl-L-homocysteine. Its function is as follows. Specifically methylates position 2 of adenine 2503 in 23S rRNA and position 2 of adenine 37 in tRNAs. The protein is Probable dual-specificity RNA methyltransferase RlmN of Thermosynechococcus vestitus (strain NIES-2133 / IAM M-273 / BP-1).